Here is a 390-residue protein sequence, read N- to C-terminus: Glucose-fructose oxidoreductase domain-containing protein 1 (390 aa).

The first 21 residues, 1 to 21, serve as a signal peptide directing secretion; sequence MLPGVGVFGTSLTARVIIPLL.

The protein belongs to the Gfo/Idh/MocA family. As to quaternary structure, homodimer. Interacts with NKIRAS2.

It localises to the secreted. Its function is as follows. Probably catalytically inactive enzyme. Does not bind NAD or NADP. This is Glucose-fructose oxidoreductase domain-containing protein 1 (Gfod1) from Mus musculus (Mouse).